The sequence spans 68 residues: Disintegrin EMS11A (68 aa).

Positions 1 to 65 (NSAHPCCDPV…DCPRNRYKGK (65 aa)) constitute a Disintegrin domain. 4 cysteine pairs are disulfide-bonded: cysteine 6–cysteine 29, cysteine 20–cysteine 26, cysteine 25–cysteine 50, and cysteine 38–cysteine 57. The short motif at 42–44 (MLD) is the Cell attachment site; atypical (MLD) element.

This sequence belongs to the disintegrin family. Dimeric disintegrin subfamily. In terms of assembly, heterodimer; disulfide-linked. As to expression, expressed by the venom gland.

It is found in the secreted. Its function is as follows. Poor inhibitor of platelet aggregation. The disintegrin inhibits the adhesion of both the alpha-4/beta-1 (ITGA4/ITGB1) and the alpha-5/beta-1 (ITGA5/ITGB1) integrins to VCAM-1 and fibronectin respectively with almost the same degree of specificity. Inhibition on alpha-IIb/beta-3 (ITGA2B/ITGB3) is low. The sequence is that of Disintegrin EMS11A from Echis multisquamatus (Central Asian sand viper).